The primary structure comprises 458 residues: MYRRLASGLYQTSQRRIAQVQPKSVFVPETIVTTLPNGFRVATENTGGSTATIGVFIDAGSRYENEKNNGTAHFLEHMAFKGTPRRTRMGLELEVENIGAHLNAYTSRESTTYYAKCFTEKLDQSVDILSDILLNSSLATKDIEAERGVIIREMEEVAQNFQEVVFDILHADVFKGNPLSYTILGPIELIQTINKNDLQGYINTHYRSGRMVLAAAGGVNHDAIVKMAEKYFGELKHGDSSTEFVPATYSPCEVRGDIPDLPMLYGAMVVEGVSWTHEDNLALMVANTLMGEYDRMRGFGVNAPTRLAEKLSQDAGIEVFQSFNTCYKETGLVGTYFVAAPESIDNLIDSVLQQWVWLANNIDEAAVDRAKRSLHTNLLLMLDGSTPVCEDIGRQLLCYGRRIPTPELHARIESITVQQLRDVCRRVFLEGQVSAAVVGKTQYWPVNEEIHGRLIRMQ.

The N-terminal 41 residues, 1–41 (MYRRLASGLYQTSQRRIAQVQPKSVFVPETIVTTLPNGFRV), are a transit peptide targeting the mitochondrion. Position 73 (histidine 73) interacts with Zn(2+). Glutamate 76 functions as the Proton acceptor in the catalytic mechanism. Zn(2+) is bound by residues histidine 77 and glutamate 153.

This sequence belongs to the peptidase M16 family. In terms of assembly, heterodimer of mppa-1 (alpha) and mppb-1 (beta) subunits, forming the mitochondrial processing protease (MPP) in which mppa-1 is involved in substrate recognition and binding and mppb-1 is the catalytic subunit. Zn(2+) is required as a cofactor.

Its subcellular location is the mitochondrion matrix. The catalysed reaction is Release of N-terminal transit peptides from precursor proteins imported into the mitochondrion, typically with Arg in position P2.. Binding to mppa-1 is required for catalytic activity. Inhibited by metal chelator ethylenediaminetetraacetic acid (EDTA). Its function is as follows. Catalytic subunit of the essential mitochondrial processing protease (MPP), which cleaves the mitochondrial sequence off newly imported precursors proteins. Preferentially, cleaves after an arginine at position P2. This chain is Mitochondrial-processing peptidase subunit beta, found in Caenorhabditis elegans.